Reading from the N-terminus, the 507-residue chain is Bifunctional purine biosynthesis protein PurH (507 aa).

The region spanning 1 to 149 (MSESKRIKTA…KNYNDVIIVA (149 aa)) is the MGS-like domain.

Belongs to the PurH family.

The enzyme catalyses (6R)-10-formyltetrahydrofolate + 5-amino-1-(5-phospho-beta-D-ribosyl)imidazole-4-carboxamide = 5-formamido-1-(5-phospho-D-ribosyl)imidazole-4-carboxamide + (6S)-5,6,7,8-tetrahydrofolate. The catalysed reaction is IMP + H2O = 5-formamido-1-(5-phospho-D-ribosyl)imidazole-4-carboxamide. It functions in the pathway purine metabolism; IMP biosynthesis via de novo pathway; 5-formamido-1-(5-phospho-D-ribosyl)imidazole-4-carboxamide from 5-amino-1-(5-phospho-D-ribosyl)imidazole-4-carboxamide (10-formyl THF route): step 1/1. The protein operates within purine metabolism; IMP biosynthesis via de novo pathway; IMP from 5-formamido-1-(5-phospho-D-ribosyl)imidazole-4-carboxamide: step 1/1. This is Bifunctional purine biosynthesis protein PurH from Bacteroides thetaiotaomicron (strain ATCC 29148 / DSM 2079 / JCM 5827 / CCUG 10774 / NCTC 10582 / VPI-5482 / E50).